A 1763-amino-acid polypeptide reads, in one-letter code: Collagen alpha-2(IV) chain (1763 aa).

The first 26 residues, 1–26 (MSSRLRIPLWLLLPTTALVYFVTTVS), serve as a signal peptide directing secretion. Positions 27–42 (TQITCRDCTNRGCFCV) are 7S domain. The interval 43–1529 (GEKGSMGIPG…SGPPGPPGPS (1487 aa)) is triple-helical region. 2 disordered regions span residues 51-529 (PGPQ…PGPK) and 550-1529 (AGYA…PGPS). Low complexity predominate over residues 72-81 (PGPKGQKGSQ). N-linked (GlcNAc...) asparagine glycosylation is present at asparagine 126. The segment covering 135 to 152 (PGLPGPPGMPGFPGPPGV) has biased composition (pro residues). Basic and acidic residues predominate over residues 190–199 (FPGEKGDRGD). A compositionally biased stretch (pro residues) spans 206–217 (RGPPGEAGPPGN). The span at 225 to 235 (PKGDPGEQGPR) shows a compositional bias: low complexity. Alanine 249 is a glycosylation site (O-linked (Xyl...) (glycosaminoglycan) serine). Low complexity predominate over residues 326–335 (DGLPGVPGLP). The span at 400 to 409 (GLPGGPGLPG) shows a compositional bias: gly residues. 2 stretches are compositionally biased toward low complexity: residues 410–419 (LPGLEGLPGP) and 428–453 (IPGA…PGPR). A compositionally biased stretch (basic and acidic residues) spans 466 to 481 (KDGRPGLDGLPGRKGE). Over residues 564–582 (LPGIPGATGAPGDDGLPGA) the composition is skewed to low complexity. Residues 583–592 (PGRPGPPGPP) show a composition bias toward pro residues. Low complexity-rich tracts occupy residues 699–714 (DAGL…AVGP) and 731–783 (KDGL…PGIP). Pro residues predominate over residues 810–832 (PGLPGPKGEPGPSTTGPPGPPGF). 10 stretches are compositionally biased toward low complexity: residues 865–895 (EIGL…KEGP), 946–977 (FPGQ…PGQK), 1040–1051 (PGLPGQPGLRGP), 1077–1086 (LMGEKGLPGL), 1108–1146 (PGLK…QPGL), 1210–1231 (PGFP…PGPR), 1280–1296 (LPGL…PGLK), 1367–1386 (PAGL…PGFP), 1462–1480 (LPGL…FAGA), and 1499–1510 (PGLPGFPGIEGI). Over residues 1511–1528 (PGPPGLPGPSGPPGPPGP) the composition is skewed to pro residues. Residues 1533–1756 (GFLLVKHSQT…SRCQVCIRSP (224 aa)) enclose the Collagen IV NC1 domain. Disulfide bonds link cysteine 1548–cysteine 1637, cysteine 1581–cysteine 1634, cysteine 1593–cysteine 1599, cysteine 1656–cysteine 1752, cysteine 1690–cysteine 1749, and cysteine 1702–cysteine 1709.

Belongs to the type IV collagen family. Trimers of two alpha 1(IV) and one alpha 2(IV) chain. Type IV collagen forms a mesh-like network linked through intermolecular interactions between 7S domains and between NC1 domains. Prolines at the third position of the tripeptide repeating unit (G-X-Y) are hydroxylated in some or all of the chains. Post-translationally, type IV collagens contain numerous cysteine residues which are involved in inter- and intramolecular disulfide bonding. 12 of these, located in the NC1 domain, are conserved in all known type IV collagens. In terms of processing, the trimeric structure of the NC1 domains is stabilized by covalent bonds between Lys and Met residues.

It localises to the secreted. Its subcellular location is the extracellular space. It is found in the extracellular matrix. The protein localises to the basement membrane. Functionally, collagen type IV is specific for basement membranes. In Ascaris suum (Pig roundworm), this protein is Collagen alpha-2(IV) chain.